The sequence spans 237 residues: Orotidine 5'-phosphate decarboxylase (237 aa).

Residues D10, K32, 59–68 (DLKLHDIPNT), T118, R180, Q189, G209, and R210 each bind substrate. The Proton donor role is filled by K61.

Belongs to the OMP decarboxylase family. Type 1 subfamily. Homodimer.

It catalyses the reaction orotidine 5'-phosphate + H(+) = UMP + CO2. It participates in pyrimidine metabolism; UMP biosynthesis via de novo pathway; UMP from orotate: step 2/2. In terms of biological role, catalyzes the decarboxylation of orotidine 5'-monophosphate (OMP) to uridine 5'-monophosphate (UMP). This chain is Orotidine 5'-phosphate decarboxylase, found in Fusobacterium nucleatum subsp. nucleatum (strain ATCC 25586 / DSM 15643 / BCRC 10681 / CIP 101130 / JCM 8532 / KCTC 2640 / LMG 13131 / VPI 4355).